We begin with the raw amino-acid sequence, 275 residues long: Elongation factor Ts (275 aa).

The involved in Mg(2+) ion dislocation from EF-Tu stretch occupies residues 76 to 79 (TDFV).

The protein belongs to the EF-Ts family.

Its subcellular location is the cytoplasm. Its function is as follows. Associates with the EF-Tu.GDP complex and induces the exchange of GDP to GTP. It remains bound to the aminoacyl-tRNA.EF-Tu.GTP complex up to the GTP hydrolysis stage on the ribosome. The protein is Elongation factor Ts of Corynebacterium glutamicum (strain R).